The primary structure comprises 135 residues: Small ribosomal subunit protein uS11 (135 aa).

This sequence belongs to the universal ribosomal protein uS11 family. In terms of assembly, part of the 30S ribosomal subunit. Interacts with proteins S7 and S18. Binds to IF-3.

Functionally, located on the platform of the 30S subunit, it bridges several disparate RNA helices of the 16S rRNA. Forms part of the Shine-Dalgarno cleft in the 70S ribosome. This Corynebacterium urealyticum (strain ATCC 43042 / DSM 7109) protein is Small ribosomal subunit protein uS11.